The primary structure comprises 213 residues: Uridine kinase (213 aa).

15 to 22 is a binding site for ATP; sequence GASASGKS.

This sequence belongs to the uridine kinase family.

The protein resides in the cytoplasm. The catalysed reaction is uridine + ATP = UMP + ADP + H(+). It carries out the reaction cytidine + ATP = CMP + ADP + H(+). The protein operates within pyrimidine metabolism; CTP biosynthesis via salvage pathway; CTP from cytidine: step 1/3. It participates in pyrimidine metabolism; UMP biosynthesis via salvage pathway; UMP from uridine: step 1/1. The polypeptide is Uridine kinase (Pectobacterium atrosepticum (strain SCRI 1043 / ATCC BAA-672) (Erwinia carotovora subsp. atroseptica)).